Consider the following 200-residue polypeptide: 3-isopropylmalate dehydratase small subunit (200 aa).

It belongs to the LeuD family. LeuD type 1 subfamily. In terms of assembly, heterodimer of LeuC and LeuD.

It catalyses the reaction (2R,3S)-3-isopropylmalate = (2S)-2-isopropylmalate. It functions in the pathway amino-acid biosynthesis; L-leucine biosynthesis; L-leucine from 3-methyl-2-oxobutanoate: step 2/4. In terms of biological role, catalyzes the isomerization between 2-isopropylmalate and 3-isopropylmalate, via the formation of 2-isopropylmaleate. The sequence is that of 3-isopropylmalate dehydratase small subunit from Vibrio atlanticus (strain LGP32) (Vibrio splendidus (strain Mel32)).